The sequence spans 549 residues: Probable glucuronosyltransferase Os01g0157700 (549 aa).

Topologically, residues 1–16 are cytoplasmic; it reads MDSEERSKKRLRLWSR. A helical; Signal-anchor for type II membrane protein transmembrane segment spans residues 17–37; the sequence is AVVHFSLCFAIGVFAALLPLA. At 38–549 the chain is on the lumenal side; it reads ATGATSIDSI…TPEEGKTKEG (512 aa). N-linked (GlcNAc...) asparagine glycans are attached at residues Asn112, Asn139, Asn214, Asn229, Asn240, Asn251, Asn264, Asn269, and Asn300. The tract at residues 232 to 252 is disordered; sequence ETTWDSSSNTTQTTWDSSSNK. Basic and acidic residues predominate over residues 350–363; it reads IEQATPEKESLTKG. Disordered stretches follow at residues 350–371, 413–432, and 441–524; these read IEQA…SHDM, EQET…ESHD, and KIEE…KETH. Asn421 and Asn452 each carry an N-linked (GlcNAc...) asparagine glycan. 3 stretches are compositionally biased toward basic and acidic residues: residues 441-465, 472-496, and 503-524; these read KIEE…HDMM, KIDE…HDMM, and KIEE…KETH.

It belongs to the glycosyltransferase 43 family.

Its subcellular location is the golgi apparatus membrane. Its function is as follows. Involved in the synthesis of glucuronoxylan hemicellulose in secondary cell walls. The sequence is that of Probable glucuronosyltransferase Os01g0157700 from Oryza sativa subsp. japonica (Rice).